Consider the following 111-residue polypeptide: Large ribosomal subunit protein uL22 (111 aa).

It belongs to the universal ribosomal protein uL22 family. In terms of assembly, part of the 50S ribosomal subunit.

In terms of biological role, this protein binds specifically to 23S rRNA; its binding is stimulated by other ribosomal proteins, e.g. L4, L17, and L20. It is important during the early stages of 50S assembly. It makes multiple contacts with different domains of the 23S rRNA in the assembled 50S subunit and ribosome. Functionally, the globular domain of the protein is located near the polypeptide exit tunnel on the outside of the subunit, while an extended beta-hairpin is found that lines the wall of the exit tunnel in the center of the 70S ribosome. The chain is Large ribosomal subunit protein uL22 from Chlamydia muridarum (strain MoPn / Nigg).